An 84-amino-acid polypeptide reads, in one-letter code: MAGERAQNLQDTFLNHVRKNKIPLTIFLVNGVKLQGVVTWFDNFCVLLRRDGHSQLVYKHAISTIMPGHPVQLFEPDETAPEKA.

In terms of domain architecture, Sm spans 11 to 71 (DTFLNHVRKN…ISTIMPGHPV (61 aa)).

It belongs to the Hfq family. As to quaternary structure, homohexamer.

RNA chaperone that binds small regulatory RNA (sRNAs) and mRNAs to facilitate mRNA translational regulation in response to envelope stress, environmental stress and changes in metabolite concentrations. Also binds with high specificity to tRNAs. The chain is RNA-binding protein Hfq from Methylorubrum populi (strain ATCC BAA-705 / NCIMB 13946 / BJ001) (Methylobacterium populi).